A 353-amino-acid chain; its full sequence is ATP-dependent kinase YFH7 (353 aa).

31 to 39 (GPPGSGKST) provides a ligand contact to ATP.

It belongs to the YFH7 family.

Its function is as follows. ATP-dependent kinase that could be involved in endoplasmic reticulum membrane assembly. The protein is ATP-dependent kinase YFH7 (YFH7) of Kluyveromyces lactis (strain ATCC 8585 / CBS 2359 / DSM 70799 / NBRC 1267 / NRRL Y-1140 / WM37) (Yeast).